The primary structure comprises 213 residues: Hemolysin-3 homolog (213 aa).

A run of 7 helical transmembrane segments spans residues 11-31 (AITH…LIIF), 41-61 (IVSF…STLL), 75-95 (IIDH…FLLG), 103-123 (FTLL…KIFF), 127-147 (FILL…IAVK), 157-177 (GFSL…FYIW), and 185-205 (AIWH…VLFY).

This sequence belongs to the UPF0073 (Hly-III) family.

Its subcellular location is the cell membrane. This Bacillus subtilis (strain 168) protein is Hemolysin-3 homolog (yplQ).